We begin with the raw amino-acid sequence, 265 residues long: MKAVVLTLAVLFLTGSQARHFWQQDDPQSSWDRVKDFATVYVDAIKDSGRDYVTQFEASALGKQLNLKLLDNWDSLTSTFAKVREQLGPVTREFWDNLEKETESLRQEMNKDLQEVKQKVQPYLDEFQKKWQEELQIYRQKVAPLGEELREGARQKVQELQDKLTPLAEEMRDRARAHVETLRQQLAPYSDELRQRMAARFEMLKEGGGSLVQYHAKASEQLKALGEKAKPALEDLRQGLLPVLENLKVSILAAIDEASKKLNAQ.

An N-terminal signal peptide occupies residues 1-18 (MKAVVLTLAVLFLTGSQA). A run of 2 repeats spans residues 67 to 88 (LKLLDNWDSLTSTFAKVREQLG) and 89 to 110 (PVTREFWDNLEKETESLRQEMN). Positions 67-265 (LKLLDNWDSL…DEASKKLNAQ (199 aa)) are 10 X approximate tandem repeats. Methionine 109 bears the Methionine sulfoxide mark. One copy of the 3; half-length repeat lies at 111–121 (KDLQEVKQKVQ). 5 tandem repeats follow at residues 122-142 (PYLDEFQKKWQEELQIYRQKV), 144-165 (PLGEELREGARQKVQELQDKLT), 166-187 (PLAEEMRDRARAHVETLRQQLA), 188-209 (PYSDELRQRMAARFEMLKEGGG), and 210-230 (SLVQYHAKASEQLKALGEKAK). Residues 231–241 (PALEDLRQGLL) form a 9; half-length repeat. Residues 242-265 (PVLENLKVSILAAIDEASKKLNAQ) form repeat 10.

Belongs to the apolipoprotein A1/A4/E family. Homodimer. Interacts with APOA1BP and CLU. Component of a sperm activating protein complex (SPAP), consisting of APOA1, an immunoglobulin heavy chain, an immunoglobulin light chain and albumin. Interacts with NDRG1. Interacts with SCGB3A2. Interacts with NAXE and YJEFN3. Post-translationally, glycosylated. Palmitoylated. In terms of processing, phosphorylation sites are present in the extracellular medium. In terms of tissue distribution, major protein of plasma HDL, also found in chylomicrons.

The protein localises to the secreted. Its function is as follows. Participates in the reverse transport of cholesterol from tissues to the liver for excretion by promoting cholesterol efflux from tissues and by acting as a cofactor for the lecithin cholesterol acyltransferase (LCAT). As part of the SPAP complex, activates spermatozoa motility. In Balaenoptera acutorostrata scammoni (North Pacific minke whale), this protein is Apolipoprotein A-I (APOA1).